A 530-amino-acid chain; its full sequence is AP-4 complex subunit mu (530 aa).

Residues 164–187 form a disordered region; that stretch reads PKQGVKPIHSGSKNSSSGGSSLST. Low complexity predominate over residues 173–186; sequence SGSKNSSSGGSSLS. Positions 227 to 527 constitute an MHD domain; it reads DNEIYIDLCE…ITDSKSFVSR (301 aa).

This sequence belongs to the adaptor complexes medium subunit family. May be part of the adaptor protein complex 4 (AP-4), a heterotetramer composed of two large adaptins (epsilon-type subunitand beta-type subunit), a medium adaptin (mu-type subunit) and a small adaptin (sigma-type).

It localises to the golgi apparatus. The protein resides in the trans-Golgi network membrane. It is found in the early endosome. Its function is as follows. Probable component of an adaptor protein complex. Adaptor protein complexes are vesicle coat components involved both in vesicle formation and cargo selection. They control the vesicular transport of proteins in different trafficking pathways. This Dictyostelium discoideum (Social amoeba) protein is AP-4 complex subunit mu (apm4).